We begin with the raw amino-acid sequence, 373 residues long: Thyroid hormone receptor beta (373 aa).

Residues 1–18 (MPSSMSGYIPSYLDKDEL) are modulating. 8 residues coordinate Zn(2+): Cys19, Cys22, Cys36, Cys39, Cys57, Cys63, Cys73, and Cys76. 2 consecutive NR C4-type zinc fingers follow at residues 19-39 (CVVC…CEGC) and 57-81 (CKYE…FKKC). A DNA-binding region (nuclear receptor) is located at residues 19–93 (CVVCGDKATG…VGMATDLVLD (75 aa)). The NR LBD domain occupies 129–373 (EEWELIQVVT…PPLFLEVFED (245 aa)). The 3,3',5-triiodo-L-thyronine site is built by Arg194, Asn243, and His347. L-thyroxine contacts are provided by Arg194, Asn243, and His347.

This sequence belongs to the nuclear hormone receptor family. NR1 subfamily.

It is found in the nucleus. In terms of biological role, nuclear hormone receptor that can act as a repressor or activator of transcription. High affinity receptor for thyroid hormones, including triiodothyronine and thyroxine. In Aquarana catesbeiana (American bullfrog), this protein is Thyroid hormone receptor beta (thrb).